A 675-amino-acid chain; its full sequence is Gastrula zinc finger protein xFG20-1 (675 aa).

10 C2H2-type zinc fingers span residues 62–84, 90–112, 118–140, 146–168, 174–196, 202–224, 257–279, 286–308, 344–366, and 373–395; these read FTCT…IRAH, FSCM…YSVH, FSCT…LRVH, YSCE…QRTH, FSCT…LKTH, HLCA…QKIH, FPCT…QSTH, and LPCT…QSTH. Residues 302–325 form a disordered region; the sequence is RTHQSTHTEGQKSLPSTESGGTFS. Positions 304–325 are enriched in polar residues; that stretch reads HQSTHTEGQKSLPSTESGGTFS. The segment covering 390–407 has biased composition (polar residues); sequence THQSTHTSPSTEFGVQTT. The interval 390 to 423 is disordered; it reads THQSTHTSPSTEFGVQTTEDNHQSPSKDHTGEKP. Over residues 408–421 the composition is skewed to basic and acidic residues; sequence EDNHQSPSKDHTGE. 8 C2H2-type zinc fingers span residues 424–446, 452–474, 480–501, 507–529, 535–557, 563–585, 591–613, and 619–642; these read FSCS…LVVH, YHCI…QRTH, FSCN…YRVH, YPCT…YKVH, YPCQ…LRTH, FSCT…LTTH, FSCT…YKMH, and FTCT…TTVH.

The protein belongs to the krueppel C2H2-type zinc-finger protein family.

The protein resides in the nucleus. May be involved in transcriptional regulation. This Xenopus laevis (African clawed frog) protein is Gastrula zinc finger protein xFG20-1.